The primary structure comprises 1054 residues: Probable sucrose-phosphate synthase 1 (1054 aa).

Residues 104–115 show a composition bias toward basic and acidic residues; it reads RLERERGRREAV. Disordered regions lie at residues 104-125, 674-693, and 708-727; these read RLERERGRREAVADMSEDLSEG, LRNEEDDDENSESDSPSDSL, and DGDKNESREKGGGSHPDDRA.

Belongs to the glycosyltransferase 1 family. As to quaternary structure, homodimer or homotetramer.

The enzyme catalyses beta-D-fructose 6-phosphate + UDP-alpha-D-glucose = sucrose 6(F)-phosphate + UDP + H(+). It functions in the pathway glycan biosynthesis; sucrose biosynthesis; sucrose from D-fructose 6-phosphate and UDP-alpha-D-glucose: step 1/2. Its activity is regulated as follows. Activity is regulated by phosphorylation and moderated by concentration of metabolites and light. Its function is as follows. Plays a role in photosynthetic sucrose synthesis by catalyzing the rate-limiting step of sucrose biosynthesis from UDP-glucose and fructose- 6-phosphate. Involved in the regulation of carbon partitioning in the leaves of plants. May regulate the synthesis of sucrose and therefore play a major role as a limiting factor in the export of photoassimilates out of the leaf. Plays a role for sucrose availability that is essential for plant growth and fiber elongation. This is Probable sucrose-phosphate synthase 1 (SPS1) from Craterostigma plantagineum (Blue gem).